We begin with the raw amino-acid sequence, 341 residues long: NADH-quinone oxidoreductase subunit H (341 aa).

8 helical membrane passes run 16–36 (LLII…AVAY), 86–106 (VVFV…WAVI), 119–139 (VGVL…IMAG), 165–185 (IGFI…SDVV), 191–211 (MWFI…GLAE), 254–274 (GAMT…LGWL), 276–296 (IPGL…FLWV), and 315–335 (VFLP…TAFG).

The protein belongs to the complex I subunit 1 family. As to quaternary structure, NDH-1 is composed of 14 different subunits. Subunits NuoA, H, J, K, L, M, N constitute the membrane sector of the complex.

The protein resides in the cell inner membrane. The catalysed reaction is a quinone + NADH + 5 H(+)(in) = a quinol + NAD(+) + 4 H(+)(out). Functionally, NDH-1 shuttles electrons from NADH, via FMN and iron-sulfur (Fe-S) centers, to quinones in the respiratory chain. The immediate electron acceptor for the enzyme in this species is believed to be ubiquinone. Couples the redox reaction to proton translocation (for every two electrons transferred, four hydrogen ions are translocated across the cytoplasmic membrane), and thus conserves the redox energy in a proton gradient. This subunit may bind ubiquinone. The polypeptide is NADH-quinone oxidoreductase subunit H (Paramagnetospirillum magneticum (strain ATCC 700264 / AMB-1) (Magnetospirillum magneticum)).